Here is a 322-residue protein sequence, read N- to C-terminus: Mitochondrial thiamine pyrophosphate carrier 1 (322 aa).

3 Solcar repeats span residues 12–111 (GSKT…VTLG), 122–208 (PAAA…LRLP), and 215–310 (PFGS…VLGI). 6 consecutive transmembrane segments (helical) span residues 18 to 38 (MIAG…LDVV), 92 to 108 (LMYV…YRSV), 128 to 148 (FIAG…LDLL), 180 to 200 (FFQG…IFFA), 221 to 241 (ASAG…FDLI), and 285 to 302 (GLTV…VTMW).

This sequence belongs to the mitochondrial carrier (TC 2.A.29) family.

Its subcellular location is the mitochondrion inner membrane. Mitochondrial transporter that mediates uptake of thiamine pyrophosphate (ThPP) into mitochondria. This chain is Mitochondrial thiamine pyrophosphate carrier 1 (tpc1), found in Botryotinia fuckeliana (strain B05.10) (Noble rot fungus).